Here is a 305-residue protein sequence, read N- to C-terminus: Virulence plasmid integrase pGP7-D (305 aa).

In terms of domain architecture, Core-binding (CB) spans 13–99; it reads LTFGEASEIW…CYISFTKFLY (87 aa). The region spanning 127–303 is the Tyr recombinase domain; it reads VKTVSISKKE…GNSSVANIPT (177 aa). Active-site residues include Lys188 and Arg257. Residue Tyr289 is the O-(3'-phospho-DNA)-tyrosine intermediate of the active site.

It belongs to the 'phage' integrase family.

The chain is Virulence plasmid integrase pGP7-D from Chlamydia muridarum (strain MoPn / Nigg).